We begin with the raw amino-acid sequence, 239 residues long: tRNA (guanine-N(7)-)-methyltransferase (239 aa).

Residues E69, E94, D121, and D144 each coordinate S-adenosyl-L-methionine. D144 is an active-site residue. K148 serves as a coordination point for substrate. Residues 150–155 (RHNKRR) form an interaction with RNA region. Residues D180 and 217–220 (TKFE) each bind substrate.

It belongs to the class I-like SAM-binding methyltransferase superfamily. TrmB family. In terms of assembly, monomer.

It carries out the reaction guanosine(46) in tRNA + S-adenosyl-L-methionine = N(7)-methylguanosine(46) in tRNA + S-adenosyl-L-homocysteine. Its pathway is tRNA modification; N(7)-methylguanine-tRNA biosynthesis. Catalyzes the formation of N(7)-methylguanine at position 46 (m7G46) in tRNA. The polypeptide is tRNA (guanine-N(7)-)-methyltransferase (Photorhabdus laumondii subsp. laumondii (strain DSM 15139 / CIP 105565 / TT01) (Photorhabdus luminescens subsp. laumondii)).